Consider the following 272-residue polypeptide: Alkaline ceramidase (272 aa).

The next 2 membrane-spanning stretches (helical) occupy residues 34-54 (FANTCTNLPIIVLPLVNIMLL) and 61-81 (VNGGLVFPQLLLTFNGLASTY). His83 provides a ligand contact to Zn(2+). 4 helical membrane passes run 96-116 (LSLVWIITVFLVVYIPVMKWF), 124-144 (LTVVRWVVLIVTAVVSALCFL), 148-168 (LNAIALMLFSIPAAVVIRYEG), and 183-203 (ILALWGVAFSFWFADRLLCDF). Zn(2+) is bound by residues His213 and His217. The chain crosses the membrane as a helical span at residues 214–234 (ALFHLLAGLAGYTIFIMFSMI). N-linked (GlcNAc...) asparagine glycosylation is present at Asn256.

The protein belongs to the alkaline ceramidase family. Zn(2+) serves as cofactor.

The protein localises to the membrane. The enzyme catalyses an N-acylsphing-4-enine + H2O = sphing-4-enine + a fatty acid. Its function is as follows. Hydrolyzes the sphingolipid ceramide into sphingosine and free fatty acid. The chain is Alkaline ceramidase from Caenorhabditis briggsae.